Here is a 529-residue protein sequence, read N- to C-terminus: Listeriolysin O (529 aa).

The signal sequence occupies residues 1–24; that stretch reads MKKIMLVFITLILVSLPIAQQTEA. A run of 4 beta stranded transmembrane segments spans residues 214–227, 234–243, 312–321, and 329–341; these read ESQL…AFKA, VNFGAISEGK, STKVKAAFDA, and SGDV…IKNS. The short motif at 483 to 493 is the Conserved undecapeptide element; sequence ECTGLAWEWWR. The Cholesterol binding motif lies at 515 to 516; sequence TL.

This sequence belongs to the cholesterol-dependent cytolysin family. Homooligomeric pore complex of 35 to 50 subunits; when inserted in the host membrane.

The protein localises to the secreted. It is found in the host membrane. Its subcellular location is the host cell membrane. Activity of listeriolysin O is regulated on multiple levels. It should be high in the phagosome, thereby allowing escape of the bacteria from the phagosomal compartment. Then, once inside the host cytosol, the activity must be controlled to prevent lysis of the host plasma membrane and loss of the intracellular environment. A cholesterol-dependent toxin that causes cytolysis by forming pores in cholesterol containing host membranes. After binding to target membranes, the protein undergoes a major conformation change, leading to its insertion in the host membrane and formation of an oligomeric pore complex. Cholesterol is required for binding to host membranes, membrane insertion and pore formation; cholesterol binding is mediated by a Thr-Leu pair in the C-terminus. Acts as a major virulence factor required for the escape of bacteria from phagosomal vacuoles and entry into the host cytosol. Can be reversibly inactivated by oxidation. The polypeptide is Listeriolysin O (hly) (Listeria monocytogenes serotype 4b (strain F2365)).